Consider the following 543-residue polypeptide: Cytochrome P450 52A1 (543 aa).

Over 1–28 the chain is Lumenal; sequence MSSSPSIAQEFLATITPYVEYCQENYTK. The chain crosses the membrane as a helical span at residues 29-48; that stretch reads WYYFIPLVILSLNLISMLHT. Residues 49-543 lie on the Cytoplasmic side of the membrane; sequence KYLERKFKAK…GAEVQMYLIL (495 aa). Cys487 is a binding site for heme.

This sequence belongs to the cytochrome P450 family. Heme is required as a cofactor.

The protein resides in the endoplasmic reticulum membrane. In terms of biological role, together with an NADPH cytochrome P450 the enzyme system catalyzes the terminal hydroxylation as the first step in the assimilation of alkanes and fatty acids. The chain is Cytochrome P450 52A1 (CYP52A1) from Candida tropicalis (Yeast).